Here is a 271-residue protein sequence, read N- to C-terminus: Mannosyl-3-phosphoglycerate phosphatase (271 aa).

The Nucleophile role is filled by Asp-13. Residues Asp-13, Asp-15, and Asp-214 each contribute to the Mg(2+) site.

This sequence belongs to the HAD-like hydrolase superfamily. MPGP family. Requires Mg(2+) as cofactor.

The protein localises to the cytoplasm. It carries out the reaction 2-O-(alpha-D-mannosyl)-3-phosphoglycerate + H2O = (2R)-2-O-(alpha-D-mannosyl)-glycerate + phosphate. This chain is Mannosyl-3-phosphoglycerate phosphatase, found in Escherichia coli O81 (strain ED1a).